The following is a 157-amino-acid chain: Prefoldin subunit alpha (157 aa).

This sequence belongs to the prefoldin subunit alpha family. Heterohexamer of two alpha and four beta subunits.

Its subcellular location is the cytoplasm. Its function is as follows. Molecular chaperone capable of stabilizing a range of proteins. Seems to fulfill an ATP-independent, HSP70-like function in archaeal de novo protein folding. In Methanopyrus kandleri (strain AV19 / DSM 6324 / JCM 9639 / NBRC 100938), this protein is Prefoldin subunit alpha.